The sequence spans 448 residues: Phosphoglucosamine mutase (448 aa).

The active-site Phosphoserine intermediate is the Ser-100. The Mg(2+) site is built by Ser-100, Asp-240, Asp-242, and Asp-244. Ser-100 carries the phosphoserine modification.

This sequence belongs to the phosphohexose mutase family. The cofactor is Mg(2+). Activated by phosphorylation.

It carries out the reaction alpha-D-glucosamine 1-phosphate = D-glucosamine 6-phosphate. Functionally, catalyzes the conversion of glucosamine-6-phosphate to glucosamine-1-phosphate. The polypeptide is Phosphoglucosamine mutase (Bacillus velezensis (strain DSM 23117 / BGSC 10A6 / LMG 26770 / FZB42) (Bacillus amyloliquefaciens subsp. plantarum)).